The sequence spans 574 residues: Proline--tRNA ligase (574 aa).

Belongs to the class-II aminoacyl-tRNA synthetase family. ProS type 1 subfamily. As to quaternary structure, homodimer.

The protein localises to the cytoplasm. It catalyses the reaction tRNA(Pro) + L-proline + ATP = L-prolyl-tRNA(Pro) + AMP + diphosphate. In terms of biological role, catalyzes the attachment of proline to tRNA(Pro) in a two-step reaction: proline is first activated by ATP to form Pro-AMP and then transferred to the acceptor end of tRNA(Pro). As ProRS can inadvertently accommodate and process non-cognate amino acids such as alanine and cysteine, to avoid such errors it has two additional distinct editing activities against alanine. One activity is designated as 'pretransfer' editing and involves the tRNA(Pro)-independent hydrolysis of activated Ala-AMP. The other activity is designated 'posttransfer' editing and involves deacylation of mischarged Ala-tRNA(Pro). The misacylated Cys-tRNA(Pro) is not edited by ProRS. The chain is Proline--tRNA ligase from Nitratidesulfovibrio vulgaris (strain DP4) (Desulfovibrio vulgaris).